Consider the following 708-residue polypeptide: MTERRRDELSEEINNLREKVMKQSEENNNLQSQVQKLTEENTTLREQVEPTPEDEDDDIELRGAAAAAAPPPPIEEECPEDLPEKFDGNPDMLAPFMAQCQIFMEKSTRDFSVDRVRVCFVTSMMTGRAARWASAKLERSHYLMHNYPAFMMEMKHVFEDPQRREVAKRKIRRLRQGMGSVIDYSNAFQMIAQDLDWNEPALIDQYHEGLSDHIQEELSHLEVAKSLSALIGQCIHIERRLARAAAARKPRSPPRALVLPHIASHHQVDPTEPVGGARMRLTQEEKERRRKLNLCLYCGTGGHYADNCPAKASKSSPAGKLPGPAVEGPSATGPEIIRSPQDDASSPHLQVMLQIHLPGRHTLFVRAMIDSGASGNFIDHEYVAQNGIPLRIKDWPILVEAIDGRPIASGPVVHETHDLIVDLGDHREVLSFDVTQSPFFPVVLGVRWLSTHDPNITWSTRSIVFDSEYCRYHCRMYSPIPPSLPPPAPQPPLYYPVDGYRVYQPVRYYYVQNVYTPVDEHVYPDHRLVDPHIEMIPGAHSIPSGHVYSLSEPEMAALRDFVARNVKDGLITPTIAPNGAQVLQVKRGWKLQVSYDCRAPNNFTIQNQYPRLSIPNLEDQAHLATYTEFVPQIPGYQTYPTYAAYPTYPVGFAWYPVGRDGQGRSLYVPVMITWNPHWYRQPPVPQYPPPQPPPPPPPPPPPPSYSTL.

The stretch at 1–50 (MTERRRDELSEEINNLREKVMKQSEENNNLQSQVQKLTEENTTLREQVEP) forms a coiled coil. Positions 21-74 (MKQSEENNNLQSQVQKLTEENTTLREQVEPTPEDEDDDIELRGAAAAAAPPPPI) are disordered. Residues 26–36 (ENNNLQSQVQK) are compositionally biased toward polar residues. The span at 37 to 48 (LTEENTTLREQV) shows a compositional bias: basic and acidic residues. Residues 76–275 (EECPEDLPEK…HQVDPTEPVG (200 aa)) are necessary for interaction with ACVRL1. A CCHC-type zinc finger spans residues 293 to 310 (NLCLYCGTGGHYADNCPA). The segment at 310–344 (AKASKSSPAGKLPGPAVEGPSATGPEIIRSPQDDA) is disordered. Residues Lys311 and Lys314 each participate in a glycyl lysine isopeptide (Lys-Gly) (interchain with G-Cter in ubiquitin) cross-link. A phosphoserine mark is found at Ser316 and Leu321. Residues Arg507, Arg598, and Arg611 each carry the omega-N-methylarginine modification. Residues 683–708 (PVPQYPPPQPPPPPPPPPPPPSYSTL) are disordered.

As to quaternary structure, homooligomer; homooligomerizes into virion-like capsids. Interacts with ACVRL1. Interacts with SIAH1 and SIAH2. Post-translationally, undergoes proteolytic cleavage. Expressed in the cytotrophoblast layer but not in the overlying syncytiotrophoblast of the placenta. Expressed in prostate and breast carcinomas but not in normal breast and prostate epithelial cells. Expressed in the Hep-G2 cell line (at protein level). Expressed in brain, liver, spleen, kidney, thymus, lung, ovary, testis, reactive lymph node, skeletal muscle, adipose tissue and placenta. Expressed in pancreatic and hepatocellular carcinomas (HCC).

The protein localises to the extracellular vesicle membrane. It is found in the cytoplasm. Its subcellular location is the nucleus. Functionally, retrotransposon-derived protein that binds its own mRNA and self-assembles into virion-like capsids. Forms virion-like extracellular vesicles that encapsulate their own mRNA and are released from cells, enabling intercellular transfer of PEG10 mRNA. Binds its own mRNA in the 5'-UTR region, in the region near the boundary between the nucleocapsid (NC) and protease (PRO) coding sequences and in the beginning of the 3'-UTR region. Involved in placenta formation: required for trophoblast stem cells differentiation. Involved at the immediate early stage of adipocyte differentiation. Overexpressed in many cancers and enhances tumor progression: promotes cell proliferation by driving cell cycle progression from G0/G1. Enhances cancer progression by inhibiting the TGF-beta signaling, possibly via interaction with the TGF-beta receptor ACVRL1. May bind to the 5'-GCCTGTCTTT-3' DNA sequence of the MB1 domain in the myelin basic protein (MBP) promoter; additional evidences are however required to confirm this result. This is Retrotransposon-derived protein PEG10 from Homo sapiens (Human).